The sequence spans 291 residues: Ribosomal RNA small subunit methyltransferase A (291 aa).

S-adenosyl-L-methionine-binding residues include Asn-29, Leu-31, Gly-56, Glu-77, Asp-102, and Asn-127.

Belongs to the class I-like SAM-binding methyltransferase superfamily. rRNA adenine N(6)-methyltransferase family. RsmA subfamily.

It localises to the cytoplasm. It catalyses the reaction adenosine(1518)/adenosine(1519) in 16S rRNA + 4 S-adenosyl-L-methionine = N(6)-dimethyladenosine(1518)/N(6)-dimethyladenosine(1519) in 16S rRNA + 4 S-adenosyl-L-homocysteine + 4 H(+). Specifically dimethylates two adjacent adenosines (A1518 and A1519) in the loop of a conserved hairpin near the 3'-end of 16S rRNA in the 30S particle. May play a critical role in biogenesis of 30S subunits. The polypeptide is Ribosomal RNA small subunit methyltransferase A (Geobacillus sp. (strain WCH70)).